The following is a 202-amino-acid chain: Small ribosomal subunit protein uS4 (202 aa).

The segment at 21–42 (LSRKSPRRAYPPGQHGQARRKR) is disordered. One can recognise an S4 RNA-binding domain in the interval 90 to 152 (MRLDNTVFRL…DRSRKLVETN (63 aa)).

It belongs to the universal ribosomal protein uS4 family. As to quaternary structure, part of the 30S ribosomal subunit. Contacts protein S5. The interaction surface between S4 and S5 is involved in control of translational fidelity.

Functionally, one of the primary rRNA binding proteins, it binds directly to 16S rRNA where it nucleates assembly of the body of the 30S subunit. Its function is as follows. With S5 and S12 plays an important role in translational accuracy. In Synechocystis sp. (strain ATCC 27184 / PCC 6803 / Kazusa), this protein is Small ribosomal subunit protein uS4.